The primary structure comprises 657 residues: MTQLAIGKPTPLGAHYDGQGVNFTLFSAHAERVELCVFDANGQEHRYDLPGHSGDIWHGYLPDARPGLRYGYRVHGPWQPAEGHRFNPAKLLIDPCARQIDGEFKDNPLLHAGHNEPDYRDNAAIVPKCVVVVDHYDWEDDAPPRTPWGSTIIYEAHVKGLTYLHPEIPVEIRGTYKALGHPVMINYLKQLGITALELLPVAQFASEPRLQRMGLSNYWGYNPVAMFALHPAYACSPETALDEFRDAIKALHKAGIEVILDIVLNHSAELDLDGPLFSLRGIDNRSYYWIREDGDYHNWTGCGNTLNLSHPAVVDYASACLRYWVETCHVDGFRFDLAAVMGRTPEFRQDAPLFTAIQNCPVLSQVKLIAEPWDIAPGGYQVGNFPPLFAEWNDHFRDAARRFWLHYDLPLGVFAGRFAASSDVFKRNGRLPSAAINLVTAHDGFTLRDCVCFNHKHNEANGEENRDGTNNNYSNNHGKEGLGGTLDLVERRRDSIHALLTTLLLSQGTPMLLAGDEHGHSQHGNNNAYCQDNQLTWLDWSQASSGLTAFTAALIHLRKRIPALMENRWWEEGDGNVRWLNRYAQPLSTDEWQNGPKQLQILLSDRFLIAINATLEVTEIVLPAGEWHAIPPFAGEDNPVITAVWQGPAHGLCVFQR.

The active-site Nucleophile is Asp-336. The active-site Proton donor is Glu-371. The tract at residues 460 to 479 (ANGEENRDGTNNNYSNNHGK) is disordered.

This sequence belongs to the glycosyl hydrolase 13 family.

The catalysed reaction is Hydrolysis of (1-&gt;6)-alpha-D-glucosidic linkages to branches with degrees of polymerization of three or four glucose residues in limit dextrin.. Its pathway is glycan degradation; glycogen degradation. Its function is as follows. Removes maltotriose and maltotetraose chains that are attached by 1,6-alpha-linkage to the limit dextrin main chain, generating a debranched limit dextrin. This Escherichia coli O81 (strain ED1a) protein is Glycogen debranching enzyme.